The chain runs to 2108 residues: Kinesin-like protein KIF26B (2108 aa).

Disordered regions lie at residues 1–124 (MNSV…PGSD) and 263–287 (KHGSKPSSLGVSNGAEKKSGSPTHQ). Over residues 40–50 (WYRKAYEESRA) the composition is skewed to basic and acidic residues. A compositionally biased stretch (low complexity) spans 58-98 (GAGSALGSSGTPSPGSGTSSPSSFTGSPGPASPGIGTSSPG). Residues 99–120 (SLGGSPGFGTGSPGSGSGGGSS) show a composition bias toward gly residues. The region spanning 450–801 (KVKVMLRICS…IQIASRVLRM (352 aa)) is the Kinesin motor domain. Position 546–553 (546–553 (GHAKLGKS)) interacts with ATP. Disordered regions lie at residues 805-825 (KTKYTSSSSGGESSCEEGRMR), 876-917 (SDKE…GKSE), 937-1166 (DGSE…ESKK), 1406-1504 (EPEA…PVTD), 1519-1653 (GLAT…SSSK), 1685-1799 (AESL…ASKL), and 1824-1974 (RAGP…WVDG). Over residues 1004–1046 (SHSPVPAAAPAHSPSPASPRSVPGSSSQHSASPLVQSPSLQSS) the composition is skewed to low complexity. Positions 1424–1461 (RESKENSAKKEMKFEDPWLKREEEVKKETAHPNEEGMM) are enriched in basic and acidic residues. Residues 1491-1500 (SSSSGEVSAS) show a composition bias toward low complexity. Composition is skewed to polar residues over residues 1521–1537 (ATQSPVHPNKSVKSSSL) and 1611–1628 (RASPQHSASGSGTSSPLN). Low complexity-rich tracts occupy residues 1713-1730 (SAGTSPPSSGASPKAGQS) and 1751-1763 (STTKTLSFSTKSL). The segment covering 1781 to 1795 (PWSTQSLSRNRSSGL) has biased composition (polar residues). Residues 1824–1836 (RAGPEAEARGGAL) are compositionally biased toward low complexity. Thr1855 carries the phosphothreonine modification. 2 stretches are compositionally biased toward polar residues: residues 1866–1875 (GHGSDNSSVL) and 1907–1925 (ATGSASSAQDSTSENSSSV). A compositionally biased stretch (basic residues) spans 1930–1948 (RSLKTPKKRSNPGSQRRRL). The segment covering 1954 to 1968 (LDTSSPVRKPPNSTG) has biased composition (polar residues). Ser1958 is subject to Phosphoserine.

Belongs to the TRAFAC class myosin-kinesin ATPase superfamily. Kinesin family. KIF26 subfamily. In terms of assembly, interacts with MYH10. In terms of processing, phosphorylation at Thr-1855 and Ser-1958 by CDKs, mainly CDK2 and CDK5, enhances the interaction with NEDD4, polyubiquitination, and subsequent proteasomal degradation. Phosphorylation occurs upon loss of interaction with microtubules. Polyubiquitinated by NEDD4, resulting in proteasomal degradation.

It is found in the cytoplasm. The protein localises to the cytoskeleton. In terms of biological role, essential for embryonic kidney development. Plays an important role in the compact adhesion between mesenchymal cells adjacent to the ureteric buds, possibly by interacting with MYH10. This could lead to the establishment of the basolateral integrity of the mesenchyme and the polarized expression of ITGA8, which maintains the GDNF expression required for further ureteric bud attraction. Although it seems to lack ATPase activity it is constitutively associated with microtubules. In Homo sapiens (Human), this protein is Kinesin-like protein KIF26B (KIF26B).